Consider the following 185-residue polypeptide: Ribosome-recycling factor (185 aa).

This sequence belongs to the RRF family.

Its subcellular location is the cytoplasm. Functionally, responsible for the release of ribosomes from messenger RNA at the termination of protein biosynthesis. May increase the efficiency of translation by recycling ribosomes from one round of translation to another. This Clostridium perfringens (strain ATCC 13124 / DSM 756 / JCM 1290 / NCIMB 6125 / NCTC 8237 / Type A) protein is Ribosome-recycling factor.